Here is a 243-residue protein sequence, read N- to C-terminus: Carboxy-S-adenosyl-L-methionine synthase (243 aa).

S-adenosyl-L-methionine contacts are provided by residues Tyr40, 65–67 (GCS), 90–91 (DN), 118–119 (DI), Asn133, and Arg200.

This sequence belongs to the class I-like SAM-binding methyltransferase superfamily. Cx-SAM synthase family. In terms of assembly, homodimer.

The enzyme catalyses prephenate + S-adenosyl-L-methionine = carboxy-S-adenosyl-L-methionine + 3-phenylpyruvate + H2O. Functionally, catalyzes the conversion of S-adenosyl-L-methionine (SAM) to carboxy-S-adenosyl-L-methionine (Cx-SAM). The polypeptide is Carboxy-S-adenosyl-L-methionine synthase (Shewanella pealeana (strain ATCC 700345 / ANG-SQ1)).